A 217-amino-acid chain; its full sequence is U exon protein (217 aa).

Disordered regions lie at residues 79-113 (ISGEGNGQSGRGAARNHPRARTRCGATSPNHGGRV) and 171-217 (KEAP…WQRR). The segment covering 188-197 (RGQRGRKRRC) has biased composition (basic residues). Positions 202-217 (GGFQQPTGANQAWQRR) are enriched in polar residues.

Belongs to the adenoviridae U exon protein family.

The protein localises to the host nucleus. The protein resides in the host nucleoplasm. It is found in the host nucleolus. Its function is as follows. Might play a role in viral replication since it is associated with viral replication centers. Seems to have an effect on DBP localization. This Human adenovirus C serotype 5 (HAdV-5) protein is U exon protein.